Reading from the N-terminus, the 150-residue chain is Endoribonuclease YbeY (150 aa).

Zn(2+) is bound by residues histidine 116, histidine 120, and histidine 126.

This sequence belongs to the endoribonuclease YbeY family. The cofactor is Zn(2+).

Its subcellular location is the cytoplasm. Its function is as follows. Single strand-specific metallo-endoribonuclease involved in late-stage 70S ribosome quality control and in maturation of the 3' terminus of the 16S rRNA. This Mesomycoplasma hyopneumoniae (strain 232) (Mycoplasma hyopneumoniae) protein is Endoribonuclease YbeY.